A 325-amino-acid chain; its full sequence is Tetraacyldisaccharide 4'-kinase (325 aa).

ATP is bound at residue 55-62 (TAGGNGKT).

Belongs to the LpxK family.

It carries out the reaction a lipid A disaccharide + ATP = a lipid IVA + ADP + H(+). It functions in the pathway glycolipid biosynthesis; lipid IV(A) biosynthesis; lipid IV(A) from (3R)-3-hydroxytetradecanoyl-[acyl-carrier-protein] and UDP-N-acetyl-alpha-D-glucosamine: step 6/6. Transfers the gamma-phosphate of ATP to the 4'-position of a tetraacyldisaccharide 1-phosphate intermediate (termed DS-1-P) to form tetraacyldisaccharide 1,4'-bis-phosphate (lipid IVA). In Enterobacter sp. (strain 638), this protein is Tetraacyldisaccharide 4'-kinase.